Consider the following 1335-residue polypeptide: Mediator of RNA polymerase II transcription subunit 15a (1335 aa).

Disordered regions lie at residues 1-27 (MDNN…TQLP), 109-172 (GTSI…NNNT), 190-225 (QDSS…QQQP), 241-389 (FQSG…QHQQ), 401-448 (IQQQ…TQSN), 496-525 (LYSS…QQLG), 567-591 (SQRT…ANGG), and 683-815 (HRPR…QSNV). Polar residues-rich tracts occupy residues 110 to 158 (TSID…TALP), 190 to 207 (QDSS…SGPQ), and 241 to 257 (FQSG…PSHI). Residues 258-270 (QQQQQNVLQPNQL) are compositionally biased toward low complexity. Over residues 271–299 (HSSQQPGVPTSATQPSTVNSAPLQGLHTN) the composition is skewed to polar residues. A compositionally biased stretch (low complexity) spans 300-314 (QQSSPQLSSQQTTQS). Residues 315–328 (MLRQHQSSMLRQHP) are compositionally biased toward polar residues. A compositionally biased stretch (low complexity) spans 329–362 (QSQQASGIHQQQSSLPQQSISPLQQQPTQLMRQQ). Residues 363-374 (AANSSGIQQKQM) are compositionally biased toward polar residues. The segment covering 401-436 (IQQQQSQQQPLQQPQQQQKQQPPAQQQLMSQQNSLQ) has biased composition (low complexity). The span at 437–448 (ATHQNPLGTQSN) shows a compositional bias: polar residues. Residues 498 to 525 (SSQGQQSQNQPSQQQMMPQLQSHHQQLG) are compositionally biased toward low complexity. Polar residues predominate over residues 567–588 (SQRTLPEMPSSSLDSTAQTESA). Residues 688 to 712 (PVQQGQLPQSQMQPMQQPQSQTVQD) are compositionally biased toward low complexity. 3 stretches are compositionally biased toward polar residues: residues 716 to 728 (DNQT…SMSM), 735 to 749 (AQQS…NVLS), and 756 to 815 (APQQ…QSNV). A coiled-coil region spans residues 834 to 882 (QDQQMQLKQQFQQRQMQQQQLQARQQQQQQQLQARQQAAQLQQMNDMND). Disordered stretches follow at residues 947 to 986 (KMGT…SSSL) and 1146 to 1165 (FAGS…GKKA). Low complexity predominate over residues 957–973 (SPFVVPSPSSTPLAPSP). Over residues 1148 to 1160 (GSETSDLESTATS) the composition is skewed to polar residues.

It belongs to the plant Mediator complex subunit 15 family. As to quaternary structure, component of the Mediator complex.

Its subcellular location is the nucleus. Its function is as follows. Component of the Mediator complex, a coactivator involved in the regulated transcription of nearly all RNA polymerase II-dependent genes. Mediator functions as a bridge to convey information from gene-specific regulatory proteins to the basal RNA polymerase II transcription machinery. The Mediator complex, having a compact conformation in its free form, is recruited to promoters by direct interactions with regulatory proteins and serves for the assembly of a functional preinitiation complex with RNA polymerase II and the general transcription factors. This chain is Mediator of RNA polymerase II transcription subunit 15a (MED15A), found in Arabidopsis thaliana (Mouse-ear cress).